The primary structure comprises 264 residues: uncharacterized protein (264 aa).

8 helical membrane passes run 19 to 39, 42 to 62, 69 to 89, 100 to 120, 136 to 156, 160 to 180, 192 to 212, and 223 to 243; these read LFPA…LPFL, YDWL…SGLE, VITL…HMGS, IFGV…YLCQ, FAVV…HFSI, WWLS…YEVN, FILI…FGAW, and LVHL…FLIV.

The protein localises to the cell membrane. This is an uncharacterized protein from Bacillus subtilis (strain 168).